Reading from the N-terminus, the 110-residue chain is Quaternary ammonium compound-resistance protein QacE (110 aa).

4 helical membrane-spanning segments follow: residues 1-21 (MKGW…TSAL), 30-50 (LAPS…LSLV), 58-78 (VAYA…AWLL), and 85-105 (AWGF…NLLS).

It belongs to the drug/metabolite transporter (DMT) superfamily. Small multidrug resistance (SMR) (TC 2.A.7.1) family.

It localises to the cell membrane. Functionally, multidrug exporter. Is implicated for the resistance to bacteriocidal quaternary ammonium compounds. The chain is Quaternary ammonium compound-resistance protein QacE (qacE) from Escherichia coli.